Consider the following 211-residue polypeptide: ATP-dependent Clp protease proteolytic subunit (211 aa).

Catalysis depends on S106, which acts as the Nucleophile. H131 is an active-site residue.

The protein belongs to the peptidase S14 family. As to quaternary structure, fourteen ClpP subunits assemble into 2 heptameric rings which stack back to back to give a disk-like structure with a central cavity, resembling the structure of eukaryotic proteasomes.

Its subcellular location is the cytoplasm. It carries out the reaction Hydrolysis of proteins to small peptides in the presence of ATP and magnesium. alpha-casein is the usual test substrate. In the absence of ATP, only oligopeptides shorter than five residues are hydrolyzed (such as succinyl-Leu-Tyr-|-NHMec, and Leu-Tyr-Leu-|-Tyr-Trp, in which cleavage of the -Tyr-|-Leu- and -Tyr-|-Trp bonds also occurs).. Functionally, cleaves peptides in various proteins in a process that requires ATP hydrolysis. Has a chymotrypsin-like activity. Plays a major role in the degradation of misfolded proteins. This chain is ATP-dependent Clp protease proteolytic subunit, found in Rhodopseudomonas palustris (strain BisA53).